A 398-amino-acid polypeptide reads, in one-letter code: MHFSTVTRDMEAFTASSLSSLGAAGGFPGAASPGADPYGPREPPPPPPRYDPCAAAAPGAPGPPPPPHAYPFAPAAGAATSAAAEPEGPGASCAAAAKAPVKKNAKVAGVSVQLEMKALWDEFNQLGTEMIVTKAGRRMFPTFQVKLFGMDPMADYMLLMDFVPVDDKRYRYAFHSSSWLVAGKADPATPGRVHYHPDSPAKGAQWMKQIVSFDKLKLTNNLLDDNGHIILNSMHRYQPRFHVVYVDPRKDSEKYAEENFKTFVFEETRFTAVTAYQNHRITQLKIASNPFAKGFRDCDPEDWPRNHRPGALPLMSAFARSRNPVASPTQPSGTEKGGHVLKDKEVKAETSRNTPEREVELLRDAGGCVNLGLPCPAECQPFNTQGLVAGRTAGDRLC.

The segment at 23-72 is disordered; that stretch reads AAGGFPGAASPGADPYGPREPPPPPPRYDPCAAAAPGAPGPPPPPHAYPF. Residues 29 to 38 are compositionally biased toward low complexity; that stretch reads GAASPGADPY. Pro residues-rich tracts occupy residues 40-50 and 60-69; these read PREPPPPPPRY and APGPPPPPHA. The T-box DNA-binding region spans 119-297; that stretch reads LWDEFNQLGT…SNPFAKGFRD (179 aa).

In terms of assembly, binds DNA as a dimer. Interacts with DSCR6. Interacts with NKX2-5.

The protein resides in the nucleus. Its function is as follows. Transcription factor that plays a key role in cardiovascular development by promoting pharyngeal arch segmentation during embryonic development. Also involved in craniofacial muscle development. Together with NKX2-5, acts as a regulator of asymmetric cardiac morphogenesis by promoting expression of PITX2. Acts upstream of TBX1 for the formation of the thymus and parathyroid glands from the third pharyngeal pouch. Required for hair follicle stem cell self-renewal. Binds to the palindromic T site 5'-TTCACACCTAGGTGTGAA-3' DNA sequence. This is T-box transcription factor TBX1 from Homo sapiens (Human).